Consider the following 927-residue polypeptide: F-box only protein 11 (927 aa).

The tract at residues 1-132 is disordered; sequence MNSVRAANRR…STSTTENFGH (132 aa). Positions 7–16 are enriched in basic residues; the sequence is ANRRPRRVSR. Low complexity predominate over residues 17 to 27; it reads PRPVQQQQQQP. Over residues 28 to 68 the composition is skewed to pro residues; sequence PQQPPPQPPQQQPPQQQPPPPPQQQQQQQPPPPPPPPPPLP. Polar residues predominate over residues 114 to 129; it reads PTKNSMEGASTSTTEN. The 47-residue stretch at 153–199 folds into the F-box domain; the sequence is QYLQEKLPDEVVLKIFSYLLEQDLCRAACVCKRFSELANDPILWKRL. PbH1 repeat units follow at residues 395–417, 418–440, 441–463, 464–486, 487–509, 510–532, 533–555, 556–578, 579–601, 602–624, 625–647, 648–670, 671–693, 694–716, 717–739, 740–762, 763–785, 786–808, and 809–830; these read GACP…YITD, HAQG…WVKN, HGNP…FTFD, HGMG…EVKA, YANP…YVHE, KGRG…WITS, NSDP…YIFG, DGRG…QIRT, NSCP…YVHE, KGQG…WVTT, GSTP…YFYD, NGHG…QIRT, GSNP…LVYN, SGLG…WIKT, DSNP…CIFN, GGRG…LIST, NSHP…EITN, HATA…FLAS, and GVNV…EKAV. The UBR-type zinc-finger motif lies at 833–904; the sequence is GQCLYKISSY…LSNPCTLAGE (72 aa).

As to quaternary structure, component of the SCF(FBXO11) complex consisting of CUL1, RBX1, SKP1 and FBXO11. Interacts with CIITA. In terms of tissue distribution, isoform 5 is expressed in keratinocytes, fibroblasts and melanocytes.

Its subcellular location is the nucleus. It localises to the chromosome. Its pathway is protein modification; protein ubiquitination. In terms of biological role, substrate recognition component of a SCF (SKP1-CUL1-F-box protein) E3 ubiquitin-protein ligase complex which mediates the ubiquitination and subsequent proteasomal degradation of target proteins, such as DTL/CDT2, BCL6, SNAI1 and PRDM1/BLIMP1. The SCF(FBXO11) complex mediates ubiquitination and degradation of BCL6, thereby playing a role in the germinal center B-cells terminal differentiation toward memory B-cells and plasma cells. The SCF(FBXO11) complex also mediates ubiquitination and degradation of DTL, an important step for the regulation of TGF-beta signaling, cell migration and the timing of the cell-cycle progression and exit. The SCF(FBXO11) complex also catalyzes ubiquitination and degradation of GSK3B-phosphorylated SNAI1. Binds to and neddylates phosphorylated p53/TP53, inhibiting its transcriptional activity. Plays a role in the regulatiom of erythropoiesis but not myelopoiesis or megakaryopoiesis. Mechanistically, activates erythroid genes by mediating the degradation of BAHD1, a heterochromatin-associated protein that recruits corepressors to H3K27me3 marks. Participates in macrophage cell death and inflammation in response to bacterial toxins by regulating the expression of complement 5a receptor 1/C5AR1 and IL-1beta. Acts as a critical regulator to determine the level of MHC-II by mediating the recognition of degron at the P/S/T domain of CIITA leading to its ubiquitination and subsequent degradation via the proteasome. Participates in the antiviral repsonse by initiating the activation of TBK1-IRF3-IFN-I axis. Mediates the 'Lys-63'-linked ubiquitination of TRAF3 to strengthen the interaction between TRAF3 and TBK1. In Homo sapiens (Human), this protein is F-box only protein 11.